The sequence spans 22 residues: Fuctinin-2 (22 aa).

The interval 1 to 22 (ELPGLPKGEKEQQEAIEHIDEV) is disordered. Residues 7–22 (KGEKEQQEAIEHIDEV) are compositionally biased toward basic and acidic residues.

To human SET/PHAPII protein. Oligomer.

The protein localises to the cytoplasm. Has a role in the physiological regulation of fucosylation processes. The polypeptide is Fuctinin-2 (Rattus norvegicus (Rat)).